A 125-amino-acid polypeptide reads, in one-letter code: Cysteine proteinase inhibitor 3 (125 aa).

The signal sequence occupies residues 1-22; that stretch reads MESKTFWIVTLLLCGTIQLAIC. The region spanning 36-124 is the Cystatin domain; sequence GGVHDLRGNQ…KQLQEFKESS (89 aa). Positions 80 to 84 match the Secondary area of contact motif; sequence QVVAG.

The protein belongs to the cystatin family. Phytocystatin subfamily.

It is found in the secreted. In terms of biological role, specific inhibitor of cysteine proteinases. Probably involved in the regulation of endogenous processes and in defense against pests and pathogens. The sequence is that of Cysteine proteinase inhibitor 3 (CYS3) from Arabidopsis thaliana (Mouse-ear cress).